A 232-amino-acid polypeptide reads, in one-letter code: Succinyl-CoA:3-ketoacid coenzyme A transferase subunit A (232 aa).

24 to 30 (GGFGLCG) is a CoA binding site.

It belongs to the 3-oxoacid CoA-transferase subunit A family. As to quaternary structure, heterodimer of a subunit A and a subunit B.

It carries out the reaction a 3-oxo acid + succinyl-CoA = a 3-oxoacyl-CoA + succinate. This is Succinyl-CoA:3-ketoacid coenzyme A transferase subunit A (scoA) from Helicobacter pylori (strain J99 / ATCC 700824) (Campylobacter pylori J99).